Here is a 124-residue protein sequence, read N- to C-terminus: Cytoinsectotoxin-4 (124 aa).

The N-terminal stretch at M1 to A19 is a signal peptide. Positions S20–R62 are excised as a propeptide. Position 123 is a phenylalanine amide (F123).

The protein belongs to the cationic peptide 06 (cytoinsectotoxin) family. In terms of tissue distribution, expressed by the venom gland.

The protein localises to the secreted. Functionally, insecticidal and antimicrobial peptide. Has insecticidal activity against larvae of flesh fly S.carnaria. Has antibacterial activity against Gram-positive bacterium B.subtilis B-501 (MIC=2.5 uM) and Gram-negative bacterium E.coli DH5alpha (MIC=10 uM). This chain is Cytoinsectotoxin-4, found in Lachesana tarabaevi (Spider).